The chain runs to 157 residues: MDPEISEQDEEKKKYTSVCVGREEDIRKSERMTAVVHDREVVIFYHKGEYHAMDIRCYHSGGPLHLGEIEDFNGQSCIVCPWHKYKITLATGEGLYQSINPKDPSAKPKWCSKGVKQRIHTVKVDNGNIYVTLSKEPFKCDSDYYATGEFKVIQSSS.

Residue M1 is modified to N-acetylmethionine. Residue S6 is modified to Phosphoserine. Rieske domains are found at residues 16–127 (TSVC…VDNG) and 17–131 (SVCV…NIYV). C57, H59, C80, and H83 together coordinate [2Fe-2S] cluster.

The cofactor is [2Fe-2S] cluster.

This chain is Rieske domain-containing protein (Rfesd), found in Mus musculus (Mouse).